The sequence spans 2036 residues: Putative mediator of RNA polymerase II transcription subunit 24 (2036 aa).

Disordered regions lie at residues 51 to 70 (NNNNSNNNNNNNNNNNNNNV), 159 to 184 (DNIENSNNNNNNNNNNNNNNSNNNIG), 212 to 451 (SPSP…QTTT), 501 to 580 (KSVN…NNNN), 754 to 840 (NLKN…SHQK), 928 to 1124 (NNNN…NKDL), 1375 to 1419 (NNKN…NNNN), and 1565 to 1608 (NSSA…NGDT). Low complexity predominate over residues 212–229 (SPSPSSSSSSSTSPSSQQ). Over residues 260-270 (EIMKVKEEPIK) the composition is skewed to basic and acidic residues. 6 stretches are compositionally biased toward low complexity: residues 273–291 (TTTTTTSTTTTTSTTSTTT), 300–311 (TNGNGEETTITT), 387–451 (QPQP…QTTT), 501–539 (KSVNNNNNNNNNNNNNNNNNNNNNYNNNNNDSMDQNSNN), 547–580 (NNNNINNNNNNNNNNNNNNNNNNNNNNNNNNNNN), and 754–770 (NLKNNKNNNNNNNNSNG). The stretch at 505–584 (NNNNNNNNNN…NNNNNNINNI (80 aa)) forms a coiled coil. Positions 778-787 (GSSTDGSNKL) are enriched in polar residues. 2 stretches are compositionally biased toward low complexity: residues 788-808 (SSTNIEEGNNNNNSSTHLNGN) and 928-943 (NNNNNTNTNNINNNKN). The stretch at 943–977 (NKNSKKSNNKNKNNKNNNKKNKNNNNNNNNNNNNN) forms a coiled coil. Basic residues predominate over residues 944-964 (KNSKKSNNKNKNNKNNNKKNK). Composition is skewed to low complexity over residues 965–999 (NNNNNNNNNNNNNNNNNNNNNNNNNNNNNNNNNNN), 1017–1118 (NNNN…NNNN), 1385–1419 (SNNSSNNSINNINNNNNNNNNNNNNNNNNNNNNNN), 1565–1584 (NSSAYSTTTTTSASTSLPKS), and 1594–1608 (SSNTSTTTTKNNGDT). Residues 1915–1968 (SKNQSLKKKQKLKQKKQQHNNNNGGEYNIDQDHIEQIQQQQQQYQKQQQQRKDE) are a coiled coil.

This sequence belongs to the Mediator complex subunit 24 family. Component of the Mediator complex.

It localises to the nucleus. Its function is as follows. Component of the Mediator complex, a coactivator involved in the regulated transcription of nearly all RNA polymerase II-dependent genes. Mediator functions as a bridge to convey information from gene-specific regulatory proteins to the basal RNA polymerase II transcription machinery. Mediator is recruited to promoters by direct interactions with regulatory proteins and serves as a scaffold for the assembly of a functional preinitiation complex with RNA polymerase II and the general transcription factors. The chain is Putative mediator of RNA polymerase II transcription subunit 24 (med24) from Dictyostelium discoideum (Social amoeba).